A 245-amino-acid polypeptide reads, in one-letter code: 2,3-bisphosphoglycerate-dependent phosphoglycerate mutase (245 aa).

Substrate is bound by residues 8–15 (RHGQSLWN), 21–22 (TG), Arg60, 87–90 (ERHY), Lys98, 114–115 (RR), and 183–184 (GN). The active-site Tele-phosphohistidine intermediate is His9. The active-site Proton donor/acceptor is Glu87.

Belongs to the phosphoglycerate mutase family. BPG-dependent PGAM subfamily.

It catalyses the reaction (2R)-2-phosphoglycerate = (2R)-3-phosphoglycerate. It functions in the pathway carbohydrate degradation; glycolysis; pyruvate from D-glyceraldehyde 3-phosphate: step 3/5. In terms of biological role, catalyzes the interconversion of 2-phosphoglycerate and 3-phosphoglycerate. This is 2,3-bisphosphoglycerate-dependent phosphoglycerate mutase from Bacillus cytotoxicus (strain DSM 22905 / CIP 110041 / 391-98 / NVH 391-98).